The sequence spans 256 residues: Pimeloyl-[acyl-carrier protein] methyl ester esterase (256 aa).

One can recognise an AB hydrolase-1 domain in the interval 17–241 (VYLIHGWGAN…KAAHAPFLSH (225 aa)). Substrate is bound by residues Trp-23, 83–84 (SL), and 145–149 (FLQLQ). Ser-83 (nucleophile) is an active-site residue. Active-site residues include Asp-207 and His-235. Residue His-235 coordinates substrate.

It belongs to the AB hydrolase superfamily. Carboxylesterase BioH family. Monomer.

It localises to the cytoplasm. It catalyses the reaction 6-carboxyhexanoyl-[ACP] methyl ester + H2O = 6-carboxyhexanoyl-[ACP] + methanol + H(+). It participates in cofactor biosynthesis; biotin biosynthesis. Its function is as follows. The physiological role of BioH is to remove the methyl group introduced by BioC when the pimeloyl moiety is complete. It allows to synthesize pimeloyl-ACP via the fatty acid synthetic pathway through the hydrolysis of the ester bonds of pimeloyl-ACP esters. This chain is Pimeloyl-[acyl-carrier protein] methyl ester esterase, found in Neisseria meningitidis serogroup C / serotype 2a (strain ATCC 700532 / DSM 15464 / FAM18).